The sequence spans 525 residues: Cytochrome P450 monooxygenase ltmJ (525 aa).

A helical transmembrane segment spans residues 21–43; it reads LTWWQTIVSFIIFCIMCSWLPGN. Residue N136 is glycosylated (N-linked (GlcNAc...) asparagine). C465 lines the heme pocket.

Belongs to the cytochrome P450 family. It depends on heme as a cofactor.

It is found in the membrane. Its pathway is secondary metabolite biosynthesis. Cytochrome P450 monooxygenase; part of the gene clusters that mediates the biosynthesis of lolitrems, indole-diterpene mycotoxins that are potent tremorgens in mammals, and are synthesized by clavicipitaceous fungal endophytes in association with their grass hosts. The geranylgeranyl diphosphate (GGPP) synthase ltmG is proposed to catalyze the first step in lolitrem biosynthesis. LtmG catalyzes a series of iterative condensations of isopentenyl diphosphate (IPP) with dimethylallyl diphosphate (DMAPP), geranyl diphosphate (GPP), and farnesyl diphosphate (FPP), to form GGPP. GGPP then condenses with indole-3-glycerol phosphate to form 3-geranylgeranylindole, an acyclic intermediate, to be incorporated into paxilline. Either ltmG or ltmC could be responsible for this step, as both are putative prenyl transferases. The FAD-dependent monooxygenase ltmM then catalyzes the epoxidation of the two terminal alkenes of the geranylgeranyl moiety, which is subsequently cyclized by ltmB, to paspaline. The cytochrome P450 monooxygenases ltmQ and ltmP can sequentially oxidize paspaline to terpendole E and terpendole F. Alternatively, ltmP converts paspaline to an intermediate which is oxidized by ltmQ to terpendole F. LtmF, ltmK, ltmE and ltmJ appear to be unique to the epichloe endophytes. The prenyltransferase ltmF is involved in the 27-hydroxyl-O-prenylation. The cytochrome P450 monooxygenase ltmK is required for the oxidative acetal ring formation. The multi-functional prenyltransferase ltmE is required for C20- and C21-prenylations of the indole ring of paspalanes and acts together with the cytochrome P450 monooxygenase ltmJ to yield lolitremanes by multiple oxidations and ring closures. The stereoisomer pairs of lolitriol and lolitrem N or lolitrem B and lolitrem F may be attributed to variations in the way in which ring closure can occur under the action of ltmJ. While the major product of this pathway is lolitrem B, the prenyl transferases and cytochrome P450 monooxygenases identified in this pathway have a remarkable versatility in their regio- and stereo-specificities to generate a diverse range of metabolites that are products of a metabolic grid rather than a linear pathway. The polypeptide is Cytochrome P450 monooxygenase ltmJ (ltmJ) (Epichloe festucae var. lolii (Neotyphodium lolii)).